A 474-amino-acid polypeptide reads, in one-letter code: Calcitonin receptor (474 aa).

Residues 1 to 24 (MRFTFTSRCLALFLLLNHPTPILP) form the signal peptide. Topologically, residues 25–146 (AFSNQTYPTI…FTPEKLKNAY (122 aa)) are extracellular. 4 N-linked (GlcNAc...) asparagine glycosylation sites follow: asparagine 28, asparagine 73, asparagine 125, and asparagine 130. Disulfide bonds link cysteine 55/cysteine 81, cysteine 72/cysteine 112, and cysteine 95/cysteine 134. The chain crosses the membrane as a helical span at residues 147–169 (VLYYLAIVGHSLSIFTLVISLGI). Over 170–181 (FVFFRSLGCQRV) the chain is Cytoplasmic. The chain crosses the membrane as a helical span at residues 182–202 (TLHKNMFLTYILNSMIIIIHL). The Extracellular segment spans residues 203–219 (VEVVPNGELVRRDPVSC). Cysteine 219 and cysteine 289 are oxidised to a cystine. Residues 220-242 (KILHFFHQYMMACNYFWMLCEGI) form a helical membrane-spanning segment. At 243–259 (YLHTLIVVAVFTEKQRL) the chain is on the cytoplasmic side. Residues 260 to 280 (RWYYLLGWGFPLVPTTIHAIT) traverse the membrane as a helical segment. Residues 281–296 (RAVYFNDNCWLSVETH) lie on the Extracellular side of the membrane. Residues 297 to 320 (LLYIIHGPVMAALVVNFFFLLNIV) traverse the membrane as a helical segment. Topologically, residues 321–340 (RVLVTKMRETHEAESHMYLK) are cytoplasmic. The helical transmembrane segment at 341–359 (AVKATMILVPLLGIQFVVF) threads the bilayer. Topologically, residues 360 to 367 (PWRPSNKM) are extracellular. A helical transmembrane segment spans residues 368-394 (LGKIYDYVMHSLIHFQGFFVATIYCFC). Over 395 to 474 (NNEVQTTVKR…LNIIEQESSA (80 aa)) the chain is Cytoplasmic.

This sequence belongs to the G-protein coupled receptor 2 family. As to quaternary structure, heterodimer of CALCR and RAMP1, RAMP2 or RAMP3; the receptor complexes function as AMYR1, AMYR2 and AMYR3 receptors, respectively, and respond to amylin/IAPP, calcitonin/CT and CGRP1 ligands. Interacts with GPRASP2.

It is found in the cell membrane. With respect to regulation, sensitive to cholera toxin. Its function is as follows. G protein-coupled receptor activated by ligand peptides amylin (IAPP), calcitonin (CT/CALCA) and calcitonin gene-related peptide type 1 (CGRP1/CALCA). CALCR interacts with receptor-activity-modifying proteins RAMP1, 2 and 3 to form receptor complexes AMYR1, 2 and 3, respectively. IAPP, CT and CGRP1 activate CALCR and AMYRs with distinct modes of receptor activation resulting in specific phenotypes. Ligand binding causes a conformation change that triggers signaling via guanine nucleotide-binding proteins (G proteins) and modulates the activity of downstream effectors. Activates cAMP-dependent pathway. In terms of biological role, non-functional protein. Unable to couple to G proteins and activate adenylyl cyclase. Does not undergo receptor internalization following ligand binding. The polypeptide is Calcitonin receptor (Homo sapiens (Human)).